Here is a 222-residue protein sequence, read N- to C-terminus: Ribulose-phosphate 3-epimerase (222 aa).

Position 7 (serine 7) interacts with substrate. Histidine 32, aspartate 34, and histidine 65 together coordinate a divalent metal cation. The active-site Proton acceptor is the aspartate 34. Substrate is bound by residues histidine 65, 141–144, 174–176, and 196–197; these read GFSG, DGG, and GS. Aspartate 174 provides a ligand contact to a divalent metal cation. Aspartate 174 functions as the Proton donor in the catalytic mechanism.

This sequence belongs to the ribulose-phosphate 3-epimerase family. The cofactor is a divalent metal cation.

The enzyme catalyses D-ribulose 5-phosphate = D-xylulose 5-phosphate. Its pathway is carbohydrate degradation. Catalyzes the reversible epimerization of D-ribulose 5-phosphate to D-xylulose 5-phosphate. This chain is Ribulose-phosphate 3-epimerase, found in Aquifex aeolicus (strain VF5).